Consider the following 209-residue polypeptide: Thiamine-phosphate synthase (209 aa).

Residues 38–42 and asparagine 70 each bind 4-amino-2-methyl-5-(diphosphooxymethyl)pyrimidine; that span reads QLREK. 2 residues coordinate Mg(2+): aspartate 71 and aspartate 90. Serine 109 is a binding site for 4-amino-2-methyl-5-(diphosphooxymethyl)pyrimidine. 135 to 137 serves as a coordination point for 2-[(2R,5Z)-2-carboxy-4-methylthiazol-5(2H)-ylidene]ethyl phosphate; the sequence is TPT. Lysine 138 is a 4-amino-2-methyl-5-(diphosphooxymethyl)pyrimidine binding site. Residues glycine 166 and 186–187 each bind 2-[(2R,5Z)-2-carboxy-4-methylthiazol-5(2H)-ylidene]ethyl phosphate; that span reads IS.

It belongs to the thiamine-phosphate synthase family. Mg(2+) is required as a cofactor.

It carries out the reaction 2-[(2R,5Z)-2-carboxy-4-methylthiazol-5(2H)-ylidene]ethyl phosphate + 4-amino-2-methyl-5-(diphosphooxymethyl)pyrimidine + 2 H(+) = thiamine phosphate + CO2 + diphosphate. It catalyses the reaction 2-(2-carboxy-4-methylthiazol-5-yl)ethyl phosphate + 4-amino-2-methyl-5-(diphosphooxymethyl)pyrimidine + 2 H(+) = thiamine phosphate + CO2 + diphosphate. The enzyme catalyses 4-methyl-5-(2-phosphooxyethyl)-thiazole + 4-amino-2-methyl-5-(diphosphooxymethyl)pyrimidine + H(+) = thiamine phosphate + diphosphate. It participates in cofactor biosynthesis; thiamine diphosphate biosynthesis; thiamine phosphate from 4-amino-2-methyl-5-diphosphomethylpyrimidine and 4-methyl-5-(2-phosphoethyl)-thiazole: step 1/1. Its function is as follows. Condenses 4-methyl-5-(beta-hydroxyethyl)thiazole monophosphate (THZ-P) and 2-methyl-4-amino-5-hydroxymethyl pyrimidine pyrophosphate (HMP-PP) to form thiamine monophosphate (TMP). The sequence is that of Thiamine-phosphate synthase from Syntrophomonas wolfei subsp. wolfei (strain DSM 2245B / Goettingen).